The chain runs to 157 residues: Succinate dehydrogenase assembly factor 2-B, mitochondrial (157 aa).

The N-terminal 24 residues, 1 to 24 (MLRQFLFSTASRRLVRPMIAPHRS), are a transit peptide targeting the mitochondrion.

The protein belongs to the SDHAF2 family. In terms of assembly, interacts with the flavoprotein subunit within the SDH catalytic dimer.

Its subcellular location is the mitochondrion matrix. Plays an essential role in the assembly of succinate dehydrogenase (SDH), an enzyme complex (also referred to as respiratory complex II) that is a component of both the tricarboxylic acid (TCA) cycle and the mitochondrial electron transport chain, and which couples the oxidation of succinate to fumarate with the reduction of ubiquinone (coenzyme Q) to ubiquinol. Required for flavinylation (covalent attachment of FAD) of the flavoprotein subunit of the SDH catalytic dimer. This chain is Succinate dehydrogenase assembly factor 2-B, mitochondrial, found in Drosophila persimilis (Fruit fly).